The sequence spans 119 residues: Large ribosomal subunit protein bL20 (119 aa).

The protein belongs to the bacterial ribosomal protein bL20 family.

Functionally, binds directly to 23S ribosomal RNA and is necessary for the in vitro assembly process of the 50S ribosomal subunit. It is not involved in the protein synthesizing functions of that subunit. This chain is Large ribosomal subunit protein bL20, found in Alkaliphilus oremlandii (strain OhILAs) (Clostridium oremlandii (strain OhILAs)).